The sequence spans 1034 residues: MLLLLLLLKISTFVDSFQIGHLEFENSNETRILEICMKNAGSWRDHRLISLPSCHNFNGLENAANLNYQYSVDLLIGAACDEETQTVSRLALRWHKLYLSSAPLSTKEKESTTIALKPHSLAGTAEVILAMCKSMKWKEIGIIYSEETKYTAHAIYDMLAEQEDDLKINVFLETDGLSNTYTILHSARALISFLTTLDLSKFFKTLKENAFRPLEFSIVHVDCNKSEISNFYTYLDNNAGEEPNPISAARLRKLYRHVALLKNSHDDMEKTEEFAKKYGLVPSYTLYKALILCDGLQLLNNYTAPRGNLSIVQQLPYLWNHVTNTETQGYSGPVFIGNDGVRLPYYEMHMWRDGKAVHVANVKPRESDYCGGNMTKNCYEFLPSSPLLEDLPPYTSDCGYDNNLCSDFHVFMIAAIVFSILLIPMAIAFYLQRKEHLIQQMPWRVPLDSISFDDNGGSLSASRRVSTISTARASYSSIFSGNVAEHAIVNKQKVSVKRHVQRRAITFSRQEMEMLNQLKYMSHTNINPFTGICFNQGSELIVMWQFTTRYSLEDLIFVKEQKFGRNFQSTFIKHIVHGINYIHNSSIKVHGALYLSNCVVDSYWVVKLTDFGIKGILKERTNHKELAPSSAFDVDAIHYKYLQLAPEHISAILEKLEEPRGTVEGDIYQLAMCIYQILFYMRPFAERQESIKELAHLLSSQSTAPLHPKVPEGNSFTMRLLSIIQQCWLYKPAARPALIKITDAVNREFGQDVKGTLIDQMIEMIDEYSANLEQIVAERTRELEQDMSVTENLLYQLLPKSVADSIRSGKTVVPEQHSSVTLLVVDVCQFTKFCEAFIPVHILETLQELYSSFDNIVQKNKAFKVENVGDAYLICSGIPEMSGFRHLREICKISLKLQAFMKTFKVRHRPSHTLQIKMGITSGAVAAGILGSTAPRFCIFGDTVNMACRMASTGNPGSIQLSELTANTLMEKFPSFMLEERGMIDVKGKGACLTFWLTGEKDIMRRQSSRSSCISQIKFELDEADNSKKMFLNV.

Residues 1–16 form the signal peptide; that stretch reads MLLLLLLLKISTFVDS. Residues 17–409 lie on the Extracellular side of the membrane; it reads FQIGHLEFEN…YDNNLCSDFH (393 aa). Asn28, Asn224, Asn301, Asn308, and Asn373 each carry an N-linked (GlcNAc...) asparagine glycan. The chain crosses the membrane as a helical span at residues 410 to 430; the sequence is VFMIAAIVFSILLIPMAIAFY. Over 431 to 1034 the chain is Cytoplasmic; sequence LQRKEHLIQQ…DNSKKMFLNV (604 aa). A Protein kinase domain is found at 464–749; the sequence is RVSTISTARA…KITDAVNREF (286 aa). ATP is bound by residues 470–478 and Lys497; that span reads TARASYSSI. Positions 758–785 form a coiled coil; sequence IDQMIEMIDEYSANLEQIVAERTRELEQ. The region spanning 821–951 is the Guanylate cyclase domain; that stretch reads TLLVVDVCQF…DTVNMACRMA (131 aa).

The protein belongs to the adenylyl cyclase class-4/guanylyl cyclase family. As to expression, expressed in AQR, PQR and URX sensory neurons.

Its subcellular location is the cell membrane. It catalyses the reaction GTP = 3',5'-cyclic GMP + diphosphate. Guanylate cyclase involved in the production of the second messenger cGMP. This chain is Receptor-type guanylate cyclase gcy-25, found in Caenorhabditis elegans.